Reading from the N-terminus, the 183-residue chain is uncharacterized protein (183 aa).

This sequence belongs to the asfivirus S183L family.

This is an uncharacterized protein from Ornithodoros (relapsing fever ticks).